We begin with the raw amino-acid sequence, 316 residues long: Ferrochelatase (316 aa).

Residues His186 and Glu268 each coordinate Fe cation.

Belongs to the ferrochelatase family.

Its subcellular location is the cytoplasm. The catalysed reaction is heme b + 2 H(+) = protoporphyrin IX + Fe(2+). Its pathway is porphyrin-containing compound metabolism; protoheme biosynthesis; protoheme from protoporphyrin-IX: step 1/1. Functionally, catalyzes the ferrous insertion into protoporphyrin IX. The chain is Ferrochelatase from Deinococcus radiodurans (strain ATCC 13939 / DSM 20539 / JCM 16871 / CCUG 27074 / LMG 4051 / NBRC 15346 / NCIMB 9279 / VKM B-1422 / R1).